The sequence spans 577 residues: MQRTCYIGELNASLVGQTVILQGWANRRRDLGGLIFIELRDRSGSIQVEVEPDSPAFHEADTVRAEYVLEVEGRFQPRPEEQRKGGLADYEVIALRVTVLSAAKTPPFELDKGESVAEDIRLKYRYLDLRRPEMQRHLMLRSRAVAAATAFLDAEGFVQVETPMLTRSTPEGARDFLVPSRLNPGEFYALPQSPQLFKQLLMIAGFDRYYQFARCFRDEDLRADRQPDFTQLDMEMSFVTQEDVLDVQERLLAHVFRTVLDYELPLPFPRLSYQEAMDRYGSDKPDLRFDRAFADVTDLFRGGEFGAFADAETVKVLAAPALTRKQLDELERVAKQNGAKGLAWARREGDGLTGGISRFLGEQAAALLERTGVEPGGTLLFSAGEWKKAVTALGAVRLALRDLFDLAAGGPRFQVAWVLDFPQLEFDEEAGSWTYMHHPFTAPRPEDIPLFGTERQGEIRAQAYDLVLNGFEVGGGSIRIHDPAVQTQMFQAIGLSEAEAREKFGFFLDALSYGTPPHGGIAWGFDRLVMVMAGASSIREVIAFPKNNRGVDLMAGAPSPVSPAQLAEVGVAVTTES.

L-aspartate is bound at residue Glu171. The segment at Gln195 to Lys198 is aspartate. Arg217 is a binding site for L-aspartate. ATP contacts are provided by residues Arg217–Glu219 and Gln226. Residue His437 participates in L-aspartate binding. ATP is bound at residue Glu472. Arg479 serves as a coordination point for L-aspartate. Position 524-527 (Gly524–Arg527) interacts with ATP.

This sequence belongs to the class-II aminoacyl-tRNA synthetase family. Type 1 subfamily. Homodimer.

The protein resides in the cytoplasm. The catalysed reaction is tRNA(Asp) + L-aspartate + ATP = L-aspartyl-tRNA(Asp) + AMP + diphosphate. In terms of biological role, catalyzes the attachment of L-aspartate to tRNA(Asp) in a two-step reaction: L-aspartate is first activated by ATP to form Asp-AMP and then transferred to the acceptor end of tRNA(Asp). This chain is Aspartate--tRNA ligase, found in Deinococcus geothermalis (strain DSM 11300 / CIP 105573 / AG-3a).